The primary structure comprises 133 residues: Small ribosomal subunit protein uS8 (133 aa).

Belongs to the universal ribosomal protein uS8 family. In terms of assembly, part of the 30S ribosomal subunit.

Its function is as follows. One of the primary rRNA binding proteins, it binds directly to 16S rRNA central domain where it helps coordinate assembly of the platform of the 30S subunit. This chain is Small ribosomal subunit protein uS8, found in Saccharolobus islandicus (strain L.S.2.15 / Lassen #1) (Sulfolobus islandicus).